Reading from the N-terminus, the 656-residue chain is Kinesin-related protein SMY1 (656 aa).

The Kinesin motor domain maps to histidine 27–isoleucine 364. Glycine 114 to serine 121 contributes to the ATP binding site. Residue threonine 583 is modified to Phosphothreonine.

It belongs to the TRAFAC class myosin-kinesin ATPase superfamily. Kinesin family.

Its subcellular location is the cytoplasm. The protein localises to the cytoskeleton. Functionally, possible microtubule-based motor that can interact or substitute with myosin 2 (MYO2). In Saccharomyces cerevisiae (strain ATCC 204508 / S288c) (Baker's yeast), this protein is Kinesin-related protein SMY1 (SMY1).